The chain runs to 38 residues: NAD-reducing hydrogenase HoxS subunit beta (38 aa).

The protein belongs to the [NiFe]/[NiFeSe] hydrogenase large subunit family. Tetramer of an alpha and a gamma subunits (flavin-containing dimer), and a delta and a nickel-containing beta subunits (hydrogenase dimer). FMN is required as a cofactor. Ni(2+) serves as cofactor.

It localises to the cytoplasm. It catalyses the reaction H2 + NAD(+) = NADH + H(+). The sequence is that of NAD-reducing hydrogenase HoxS subunit beta (hoxH) from Rhodococcus opacus (Nocardia opaca).